The following is a 188-amino-acid chain: Elongation factor P (188 aa).

Belongs to the elongation factor P family.

It is found in the cytoplasm. It functions in the pathway protein biosynthesis; polypeptide chain elongation. Its function is as follows. Involved in peptide bond synthesis. Stimulates efficient translation and peptide-bond synthesis on native or reconstituted 70S ribosomes in vitro. Probably functions indirectly by altering the affinity of the ribosome for aminoacyl-tRNA, thus increasing their reactivity as acceptors for peptidyl transferase. This chain is Elongation factor P, found in Chlorobium chlorochromatii (strain CaD3).